The primary structure comprises 307 residues: Ornithine carbamoyltransferase (307 aa).

Residues 50 to 53 (STRT), Gln-77, Arg-101, and 128 to 131 (HPCQ) each bind carbamoyl phosphate. Residues Asn-160, Asp-224, and 228–229 (SM) each bind L-ornithine. Carbamoyl phosphate contacts are provided by residues 264–265 (CL) and Arg-292.

The protein belongs to the aspartate/ornithine carbamoyltransferase superfamily. OTCase family.

It is found in the cytoplasm. The enzyme catalyses carbamoyl phosphate + L-ornithine = L-citrulline + phosphate + H(+). The protein operates within amino-acid biosynthesis; L-arginine biosynthesis; L-arginine from L-ornithine and carbamoyl phosphate: step 1/3. In terms of biological role, reversibly catalyzes the transfer of the carbamoyl group from carbamoyl phosphate (CP) to the N(epsilon) atom of ornithine (ORN) to produce L-citrulline. The chain is Ornithine carbamoyltransferase from Clavibacter sepedonicus (Clavibacter michiganensis subsp. sepedonicus).